Consider the following 354-residue polypeptide: Nicotinate-nucleotide--dimethylbenzimidazole phosphoribosyltransferase (354 aa).

E313 acts as the Proton acceptor in catalysis.

It belongs to the CobT family.

It carries out the reaction 5,6-dimethylbenzimidazole + nicotinate beta-D-ribonucleotide = alpha-ribazole 5'-phosphate + nicotinate + H(+). Its pathway is nucleoside biosynthesis; alpha-ribazole biosynthesis; alpha-ribazole from 5,6-dimethylbenzimidazole: step 1/2. Catalyzes the synthesis of alpha-ribazole-5'-phosphate from nicotinate mononucleotide (NAMN) and 5,6-dimethylbenzimidazole (DMB). This Ralstonia nicotianae (strain ATCC BAA-1114 / GMI1000) (Ralstonia solanacearum) protein is Nicotinate-nucleotide--dimethylbenzimidazole phosphoribosyltransferase.